The chain runs to 401 residues: Zinc finger CCHC domain-containing protein 12 (401 aa).

Disordered stretches follow at residues 1-20 (MASI…PLPP) and 270-292 (DSDE…SAGP). The span at 270-282 (DSDEDVILVEPDD) shows a compositional bias: acidic residues. The CCHC-type zinc finger occupies 345–362 (VHCSHCGEEGHSKETCDN).

This sequence belongs to the ZCCHC12 family. As to quaternary structure, interacts with SMAD1 and CREB-binding protein (CBP). Forms a protein-DNA complex through its association with SMAD1.

Transcriptional coactivator in the bone morphogenetic protein (BMP)-signaling pathway. It positively modulates BMP signaling by interacting with SMAD1 and associating with CBP in the transcription complex. It contributes to the BMP-induced enhancement of cholinergic-neuron-specific gene expression. This is Zinc finger CCHC domain-containing protein 12 (Zcchc12) from Rattus norvegicus (Rat).